Consider the following 236-residue polypeptide: Carbonyl reductase family member 4 (236 aa).

Residues 11 to 14 (SRGI), 34 to 35 (RD), aspartate 55, and 82 to 84 (SAG) contribute to the NADP(+) site. Residue serine 134 participates in substrate binding. Residues tyrosine 147, lysine 151, and 180 to 182 (IHT) contribute to the NADP(+) site. Tyrosine 147 functions as the Proton acceptor in the catalytic mechanism.

Belongs to the short-chain dehydrogenases/reductases (SDR) family. Homotetramer (in vitro). Heterotetramer with HSD17B8; contains two molecules each of HSD17B8 and CBR4.

It localises to the mitochondrion matrix. Its pathway is lipid metabolism; fatty acid biosynthesis. Its function is as follows. The heterotetramer with HSD17B8 has NADH-dependent 3-ketoacyl-acyl carrier protein reductase activity, and thereby plays a role in mitochondrial fatty acid biosynthesis. Within the heterotetramer, HSD17B8 binds NADH; CBR4 binds NADPD. The homotetramer has NADPH-dependent quinone reductase activity. Both homotetramer and the heterotetramer have broad in vitro substrate specificity and can reduce 9,10-phenanthrenequinone, 1,4-benzoquinone and various other o-quinones and p-quinones. The protein is Carbonyl reductase family member 4 (cbr4) of Xenopus tropicalis (Western clawed frog).